Reading from the N-terminus, the 196-residue chain is Probable malonic semialdehyde reductase RutE (196 aa).

The protein belongs to the nitroreductase family. HadB/RutE subfamily. FMN is required as a cofactor.

The catalysed reaction is 3-hydroxypropanoate + NADP(+) = 3-oxopropanoate + NADPH + H(+). May reduce toxic product malonic semialdehyde to 3-hydroxypropionic acid, which is excreted. This Escherichia coli O8 (strain IAI1) protein is Probable malonic semialdehyde reductase RutE.